A 215-amino-acid chain; its full sequence is Cytochrome b6 (215 aa).

The helical transmembrane segment at 32–52 threads the bilayer; sequence IFYCLGGITLVCFLIQFATGF. Cys-35 provides a ligand contact to heme c. Heme b contacts are provided by His-86 and His-100. 3 helical membrane passes run 90–110, 116–136, and 186–206; these read ASMMVLMMILHVFRVYLTGGF, LTWVSGVILAVITVSFGVTGY, and AHTFVLPWLIAVFMLFHFLMI. 2 residues coordinate heme b: His-187 and His-202.

It belongs to the cytochrome b family. PetB subfamily. The 4 large subunits of the cytochrome b6-f complex are cytochrome b6, subunit IV (17 kDa polypeptide, PetD), cytochrome f and the Rieske protein, while the 4 small subunits are PetG, PetL, PetM and PetN. The complex functions as a dimer. Requires heme b as cofactor. Heme c serves as cofactor.

It localises to the cellular thylakoid membrane. In terms of biological role, component of the cytochrome b6-f complex, which mediates electron transfer between photosystem II (PSII) and photosystem I (PSI), cyclic electron flow around PSI, and state transitions. The protein is Cytochrome b6 of Nostoc punctiforme (strain ATCC 29133 / PCC 73102).